Reading from the N-terminus, the 407-residue chain is MGALTIVAKYMIVAQIEVNGGVDKSDIIGALFSQTEGLLGKDMDLRELQMMGRIGRIEVDIQEKDGKTKAKIYIPSNLDRYETALVAALIESIERVGPYPATVKVLEIRDLREEKRKKIVERAKELIKMIEEEILPDTKEIIEKLKEDVAKAEVVEYGPEKLPAGPDVDKSDWIIVVEGRADVVNLVKHGYRNVIALEGISRGVPQTIIDLSKRKSITLFIDGDKGGEMVLKELMKVAHIDYVARAPPGKEVEQLTAKEIAKALRNKVTLEEWLAQQKAGAEKTEAAAPPPQQPTAPPAAPSQQPIAEVPQEIVKRLGDMQGTLEAELYDTNWSLIKRIAVRELPDELANSTDSIYAILMDGIVTQRIVDLAAKKGVKIIITARVGPLTKVPEDLKIVTFEQLQKLA.

The Toprim domain maps to 172 to 248; that stretch reads DWIIVVEGRA…HIDYVARAPP (77 aa). 3 residues coordinate Mg(2+): Glu-178, Asp-222, and Asp-224. Residues 279 to 304 form a disordered region; that stretch reads AGAEKTEAAAPPPQQPTAPPAAPSQQ. Residues 288-300 are compositionally biased toward pro residues; it reads APPPQQPTAPPAA.

The protein belongs to the archaeal DnaG primase family. In terms of assembly, forms a ternary complex with MCM helicase and DNA. Component of the archaeal exosome complex. Mg(2+) is required as a cofactor.

The catalysed reaction is ssDNA + n NTP = ssDNA/pppN(pN)n-1 hybrid + (n-1) diphosphate.. Its function is as follows. RNA polymerase that catalyzes the synthesis of short RNA molecules used as primers for DNA polymerase during DNA replication. Also part of the exosome, which is a complex involved in RNA degradation. Acts as a poly(A)-binding protein that enhances the interaction between heteromeric, adenine-rich transcripts and the exosome. The chain is DNA primase DnaG from Pyrobaculum calidifontis (strain DSM 21063 / JCM 11548 / VA1).